The primary structure comprises 179 residues: Protein GrpE (179 aa).

The span at 1–14 (MSKKDKKEEIKEEV) shows a compositional bias: basic and acidic residues. The tract at residues 1-40 (MSKKDKKEEIKEEVEATEPTTEESVEEVAEETSENKELQE) is disordered. Over residues 15 to 32 (EATEPTTEESVEEVAEET) the composition is skewed to acidic residues.

The protein belongs to the GrpE family. Homodimer.

It is found in the cytoplasm. Participates actively in the response to hyperosmotic and heat shock by preventing the aggregation of stress-denatured proteins, in association with DnaK and GrpE. It is the nucleotide exchange factor for DnaK and may function as a thermosensor. Unfolded proteins bind initially to DnaJ; upon interaction with the DnaJ-bound protein, DnaK hydrolyzes its bound ATP, resulting in the formation of a stable complex. GrpE releases ADP from DnaK; ATP binding to DnaK triggers the release of the substrate protein, thus completing the reaction cycle. Several rounds of ATP-dependent interactions between DnaJ, DnaK and GrpE are required for fully efficient folding. The chain is Protein GrpE from Streptococcus mutans serotype c (strain ATCC 700610 / UA159).